The primary structure comprises 381 residues: Creatine kinase M-type (381 aa).

Residues 11 to 98 (KLNFKAEEEY…FDPIIQDRHG (88 aa)) form the Phosphagen kinase N-terminal domain. The Phosphagen kinase C-terminal domain maps to 125 to 367 (YVLSSRVRTG…KLMVEMEKKL (243 aa)). ATP is bound at residue 128–132 (SSRVR). A Phosphoserine modification is found at serine 164. Phosphothreonine is present on threonine 166. Serine 178 is subject to Phosphoserine. Threonine 180 carries the phosphothreonine modification. Histidine 191 serves as a coordination point for ATP. The residue at position 199 (serine 199) is a Phosphoserine. Positions 236 and 292 each coordinate ATP. Threonine 313 and threonine 322 each carry phosphothreonine. Residues 320–325 (RGTGGV) and aspartate 335 each bind ATP. A Phosphoserine modification is found at serine 372.

The protein belongs to the ATP:guanido phosphotransferase family. In terms of assembly, dimer of identical or non-identical chains, which can be either B (brain type) or M (muscle type). With MM being the major form in skeletal muscle and myocardium, MB existing in myocardium, and BB existing in many tissues, especially brain.

It catalyses the reaction creatine + ATP = N-phosphocreatine + ADP + H(+). Reversibly catalyzes the transfer of phosphate between ATP and various phosphogens (e.g. creatine phosphate). Creatine kinase isoenzymes play a central role in energy transduction in tissues with large, fluctuating energy demands, such as skeletal muscle, heart, brain and spermatozoa. The protein is Creatine kinase M-type (CKM) of Sus scrofa (Pig).